The sequence spans 410 residues: Transcription termination factor, mitochondrial (410 aa).

Residues 1–44 constitute a mitochondrion transit peptide; it reads MIRSLLRSFETALKLHAGLNMHPMHCSRRLLFSQYENRASPSRL.

Belongs to the mTERF family.

It localises to the mitochondrion. Its function is as follows. Transcription termination factor. Binds promoter DNA and regulates mitochondrial replication and transcription. Transcription termination activity may be polarized with highest termination activity occurring when its DNA-binding site is positioned in the reverse orientation with respect to the incoming RNA polymerase. Required for normal topology and maintenance of mitochondrial DNA (mtDNA) levels. Regulates mtDNA replication by promoting replication pausing, possibly by acting as a natural barrier to replication fork progression. Its function in replication pausing prevents unregulated replication that may occur for example by collisions between the machineries of DNA replication and transcription during mtDNA synthesis. This ensures the incorporation of RNA transcripts into replication intermediates at the replication fork and allow for proper fork progression. Shares mtDNA binding sites with the mitochondrial termination factor mTerf5 and thereby may antagonize mTerf5 function during replication to regulate pausing. Likely to function downstream of Dref which activates genes involved in mtDNA replication and maintenance. This is Transcription termination factor, mitochondrial from Drosophila melanogaster (Fruit fly).